We begin with the raw amino-acid sequence, 472 residues long: UDP-N-acetylmuramoyl-L-alanyl-D-glutamate--2,6-diaminopimelate ligase (472 aa).

Position 21 (S21) interacts with UDP-N-acetyl-alpha-D-muramoyl-L-alanyl-D-glutamate. ATP is bound at residue 99 to 105; that stretch reads GTNGKTS. UDP-N-acetyl-alpha-D-muramoyl-L-alanyl-D-glutamate contacts are provided by residues 143-144, S170, Q176, and R178; that span reads TT. At K210 the chain carries N6-carboxylysine. Residues R367, 391–394, G440, and E444 contribute to the meso-2,6-diaminopimelate site; that span reads DNPR. Positions 391-394 match the Meso-diaminopimelate recognition motif motif; that stretch reads DNPR.

It belongs to the MurCDEF family. MurE subfamily. It depends on Mg(2+) as a cofactor. Post-translationally, carboxylation is probably crucial for Mg(2+) binding and, consequently, for the gamma-phosphate positioning of ATP.

Its subcellular location is the cytoplasm. It catalyses the reaction UDP-N-acetyl-alpha-D-muramoyl-L-alanyl-D-glutamate + meso-2,6-diaminopimelate + ATP = UDP-N-acetyl-alpha-D-muramoyl-L-alanyl-gamma-D-glutamyl-meso-2,6-diaminopimelate + ADP + phosphate + H(+). It functions in the pathway cell wall biogenesis; peptidoglycan biosynthesis. Catalyzes the addition of meso-diaminopimelic acid to the nucleotide precursor UDP-N-acetylmuramoyl-L-alanyl-D-glutamate (UMAG) in the biosynthesis of bacterial cell-wall peptidoglycan. The polypeptide is UDP-N-acetylmuramoyl-L-alanyl-D-glutamate--2,6-diaminopimelate ligase (Anaplasma marginale (strain St. Maries)).